Consider the following 792-residue polypeptide: DNA ligase (792 aa).

Residues D42 to D46, S91 to L92, and E124 each bind NAD(+). K126 serves as the catalytic N6-AMP-lysine intermediate. The NAD(+) site is built by R147, E189, K306, and K330. The Zn(2+) site is built by C424, C426, C448, and C454. Residues K714–G792 form the BRCT domain.

The protein belongs to the NAD-dependent DNA ligase family. LigA subfamily. It depends on Mg(2+) as a cofactor. Mn(2+) is required as a cofactor.

The catalysed reaction is NAD(+) + (deoxyribonucleotide)n-3'-hydroxyl + 5'-phospho-(deoxyribonucleotide)m = (deoxyribonucleotide)n+m + AMP + beta-nicotinamide D-nucleotide.. DNA ligase that catalyzes the formation of phosphodiester linkages between 5'-phosphoryl and 3'-hydroxyl groups in double-stranded DNA using NAD as a coenzyme and as the energy source for the reaction. It is essential for DNA replication and repair of damaged DNA. In Caulobacter sp. (strain K31), this protein is DNA ligase.